We begin with the raw amino-acid sequence, 223 residues long: MATRKAAKTKANGPAHVPSGPSQVLAVVYGTLLLVYLRFIFSAGITHDPAKVMTQALPGLLLLHMGYCVVVLGNKPGRKIGTDVSTAMIAAALSVFFSVIIFGLLVLFGAPAISLVHNTFVCAMHMSILAVLPLFFTYHLDSKVWADIIAMRRPLDHVYAASVCTLIGAWLGAIPIPYDWDRPWQQWPITILAGAYLGYFVGTLGGIALELTKSLCSKTKKTE.

The next 6 helical transmembrane spans lie at 25 to 45 (LAVV…SAGI), 52 to 72 (VMTQ…VVVL), 88 to 108 (MIAA…LVLF), 120 to 140 (FVCA…TYHL), 158 to 178 (VYAA…PIPY), and 189 to 209 (ITIL…GIAL).

Belongs to the PIGF family.

It localises to the endoplasmic reticulum membrane. It participates in glycolipid biosynthesis; glycosylphosphatidylinositol-anchor biosynthesis. Acts in the GPI biosynthetic pathway between GlcNAc-PI synthesis and GPI transfer to protein. This is Glycosylphosphatidylinositol anchor biosynthesis protein 11 (GPI11) from Yarrowia lipolytica (strain CLIB 122 / E 150) (Yeast).